Here is a 608-residue protein sequence, read N- to C-terminus: Extracellular metalloproteinase 5 (608 aa).

The first 20 residues, 1 to 20, serve as a signal peptide directing secretion; sequence MHGLLLAAAGLLSLPLHVIA. A propeptide spanning residues 21-244 is cleaved from the precursor; it reads HPQPSTNLAG…VHNVVDYVSH (224 aa). An N-linked (GlcNAc...) asparagine glycan is attached at Asn285. His427 contributes to the Zn(2+) binding site. Glu428 is a catalytic residue. His431 contacts Zn(2+). Asn591 is a glycosylation site (N-linked (GlcNAc...) asparagine).

It belongs to the peptidase M36 family. The cofactor is Zn(2+).

It is found in the secreted. Secreted metalloproteinase probably acting as a virulence factor. The sequence is that of Extracellular metalloproteinase 5 (MEP5) from Trichophyton tonsurans (Scalp ringworm fungus).